The primary structure comprises 641 residues: MPSSKARSSPSVDRRERLTLAKLASYDDVATDALVDCAYFWTKTRKNRTKYIPVRGLAEDTVAHILLHDVIVAKDVSAAERKILDLIGMKRYLAKLPNDREKDWFRKHLRKYIQMYLPDCPFEVTTTNRYTITEHEAAICARKFIPQGQEIKYLSGTLVPMTKEEERDLDLKRKDFSIVMSSRRKTPSFFLGPARFANHDCSANGRLVTRGSEGMQVVATRDIYIGEEITVSYGEDYFGIDNCECLCLSCERVPRNGWSQNLAPGPQSKPSTPEPKASEDHLTPRKRKAQSDIDSDSSPSSTPRKRGKFTPRGSKLRSQLSLTEDIAISIESEPRVPSSNLALSAQEAGDSGKSSSAGDNVESSGTDSESLTSITPQESQRSSASTAATSVFDEAVSLNTRPTKSAVTTAAPAESSIAAEAPLSTTIPETDIKLEVEPSCEPTTTVTAQLDTTVRADSCVSDISSSTKLEDGSEALEHVKKPRKPRTKRVYLTIEPESKLNRVPGDYTKTPKLLAHSYDRWVDCHTCNAWFVQQNSYLTRRECPRCERHSMLYGFRWPKTEKEGPNDDEERVMDHRTIHRFLYPEEEALVSRRGRGVSFGLTPTPELSDMRSETPDSEALDERGNTRVTRRRTRAIRVTTV.

The 115-residue stretch at 120 to 234 folds into the SET domain; the sequence is CPFEVTTTNR…IGEEITVSYG (115 aa). 2 disordered regions span residues 261 to 388 and 596 to 628; these read NLAP…STAA and GVSFGLTPTPELSDMRSETPDSEALDERGNTRV. The span at 348-359 shows a compositional bias: low complexity; the sequence is AGDSGKSSSAGD. Positions 361-381 are enriched in polar residues; the sequence is VESSGTDSESLTSITPQESQR. Residues 608–625 show a composition bias toward basic and acidic residues; the sequence is SDMRSETPDSEALDERGN.

The protein belongs to the class V-like SAM-binding methyltransferase superfamily. Histone-lysine methyltransferase family. Suvar4-20 subfamily.

The protein localises to the nucleus. Its subcellular location is the chromosome. The enzyme catalyses L-lysyl(20)-[histone H4] + 3 S-adenosyl-L-methionine = N(6),N(6),N(6)-trimethyl-L-lysyl(20)-[histone H4] + 3 S-adenosyl-L-homocysteine + 3 H(+). Functionally, histone methyltransferase that trimethylates 'Lys-20' of histone H4 to form H4K20me3. This chain is Histone-lysine N-methyltransferase set9 (set9), found in Emericella nidulans (strain FGSC A4 / ATCC 38163 / CBS 112.46 / NRRL 194 / M139) (Aspergillus nidulans).